Consider the following 311-residue polypeptide: Mas-related G-protein coupled receptor member E (311 aa).

At 1–25 (MEPREAGQHAGAADGAQEDVAFNLV) the chain is on the extracellular side. Residues 26–46 (ILSLTEGLGLGGLLGNGAVLW) form a helical membrane-spanning segment. Topologically, residues 47 to 63 (LLSSNVYRNPFAIYLLD) are cytoplasmic. Residues 64-84 (VACADLIFLGCHMVAIIPDLL) traverse the membrane as a helical segment. The Extracellular portion of the chain corresponds to 85 to 95 (QGRLDFPGFVQ). A helical membrane pass occupies residues 96 to 116 (TSLATLRFFCYIVGLSLLVAV). Residues 117–136 (SVEQCLAALFPAWYSCRRPR) are Cytoplasmic-facing. Residues 137–157 (HLTTCVCALTWACCLLLHLLL) form a helical membrane-spanning segment. At 158–177 (SGACTQFFGEPSRHLCRTLW) the chain is on the extracellular side. Residues 178–198 (LVAAVLLAVLCCTMCGASLML) traverse the membrane as a helical segment. Over 199–216 (LLQVERGPQRPPPRGFPT) the chain is Cytoplasmic. Residues 217 to 237 (LILLAVLLFLFCGLPFGIYWL) form a helical membrane-spanning segment. The Extracellular portion of the chain corresponds to 238-251 (SRNLLWHIPHYFYH). A helical transmembrane segment spans residues 252–272 (FSFLTAAVYCAAKPVVYFCLG). At 273–311 (SAQGRRLPLRLVLQRALGDEAELGAVRETSRRGLVDIAA) the chain is on the cytoplasmic side.

This sequence belongs to the G-protein coupled receptor 1 family. Mas subfamily.

It localises to the cell membrane. Orphan receptor. May regulate nociceptor function and/or development, including the sensation or modulation of pain. The protein is Mas-related G-protein coupled receptor member E (MRGPRE) of Macaca fascicularis (Crab-eating macaque).